The sequence spans 252 residues: MNMIQRFMQSMAKTRGLCHPDCVKASSEQEDYDASQLSIWWIMLGRKTTREKWMNQALSSLSKTCISIWWKMSGIRGKMCREREQPLTVKDCLECAFKKGLPRREHWAHVGCTFKAPPFACHIPRVPMKGEVIETKSLDEAFKLLIKQPVGARLHVFSPDLDNVGEGVYEGLSSLSRKESRYVGLRDVIIVAVNKSEGKTVATVKICYKKKTSFVKVCLSRMFVQLGGGEESQVKEPTGLLVDFCIPRLSIN.

This sequence belongs to the heat induced plant HTT protein family. In terms of tissue distribution, expressed ubiquitously, including in seedlings, leaves, stems, inflorescences and siliques.

It localises to the cytoplasm. Its subcellular location is the nucleus. Mediates both basal and acquired thermotolerance via HSFA1s-directed pathways (e.g. HSFA1A, HSFA1B, and HSFA1D). Triggers the expression of HSFA1A and HSFA1B. The polypeptide is Protein HEAT-INDUCED TAS1 TARGET 2 (Arabidopsis thaliana (Mouse-ear cress)).